We begin with the raw amino-acid sequence, 943 residues long: MHKRNGPQAPPGRGAVTARQLGLLVDFSPDGLMIPEDGINEEELEAEFLALVGGQPQALEKLKGQGPLPMEAIEKMARLCMRDLDEDEEGTDEDDVEADEDLLAELNEVLGEEQKAVEPLMPVAQPKPSGPNPGVEATLQERLTLYQSALESARQAGDSAKMRRYDRGLKTLENLLVSAKKGNIINEADIPPPVASGKGAAAGHSHTQATSQLASVSPPAPESSGTLEAPSTTTPTSAKPQLPPDPCSPLARLQSLQHEYKLAALRAKHQDDTATATRHLRIAKSFDPVLEALSRGELVDLSRLPPPPDQLSPEPPLPAAQPLTSASTLTRPEVPQPPRNLLEALEQRMERYHVAAAQAKAKGDQRKARMHERIVKQYQDAIRAHKAGRAVDVAELPVPPGFPPMQGLESAEPSQQSLVGVLETAMRLANHDEGSDDEEEETPKKQNTPAASTTQLKSSPSKAPPSGPAPAGKAAPKGTSNRAQQQLAFLEGRKKQLLQAALRAKQKNDVEGAKMHLRQAKGLEPMLEASRNGLPVDIAKVPPAPVNKDDFVLVQRPGPGLSQEAVRRYGELTKLLRQQHEMCLNHSTQFTHLGNIAETIKFEKLAEDCKRSMDTLKQAFARSLPTPAARFEQRTFSVIKVFPDLSNSDMLLFIVKGINLPTPTGLSPSDLDAFVRFDFPYPNVEEAQKDKTSVIKNTDSPEFKEQFKLCINRGHRGFRRAIQTKGIKFEVVHKGGLFKTDRVLGTAQLKLGTLETACEVHEILEVLDGRRPTGGRLEVMVRIREPLTAQQLETTTERWLVIDHIPAAMPTVTGPKAKAPLIPASSREAGNRSARPLHSLSVLAFDQERLERKILALRQARRPVPPEVAQQYQDVVQRSQWQRAQLEQGGAALRREYASHLERQLHFYTEAARRLGYDGSREAAKEALYRRNLVESELQRLRR.

At Thr91 the chain carries Phosphothreonine. 2 disordered regions span residues 186-250 and 300-337; these read NEAD…CSPL and DLSR…VPQP. Low complexity-rich tracts occupy residues 195-206 and 229-238; these read ASGKGAAAGHSH and APSTTTPTSA. The residue at position 248 (Ser248) is a Phosphoserine. Over residues 304 to 319 the composition is skewed to pro residues; it reads LPPPPDQLSPEPPLPA. Residues 339–385 are a coiled coil; it reads RNLLEALEQRMERYHVAAAQAKAKGDQRKARMHERIVKQYQDAIRAH. Residues 430–483 are disordered; sequence NHDEGSDDEEEETPKKQNTPAASTTQLKSSPSKAPPSGPAPAGKAAPKGTSNRA. At Ser435 the chain carries Phosphoserine. Residues 445–456 show a composition bias toward polar residues; the sequence is KQNTPAASTTQL. Residues 469–478 are compositionally biased toward low complexity; that stretch reads APAGKAAPKG. The stretch at 477–510 forms a coiled coil; that stretch reads KGTSNRAQQQLAFLEGRKKQLLQAALRAKQKNDV. Residues 630–764 enclose the C2 domain; that stretch reads RFEQRTFSVI…ETACEVHEIL (135 aa).

It belongs to the CC2D1 family. Highly expressed in brain, expression is enriched in the gray matter and strongest in the olfactory bulb.

Its subcellular location is the cytoplasm. The protein resides in the nucleus. It localises to the cytoskeleton. The protein localises to the microtubule organizing center. It is found in the centrosome. Transcription factor that binds specifically to the DRE (dual repressor element) and represses HTR1A gene transcription in neuronal cells. The combination of calcium and ATP specifically inactivates the binding with FRE. May play a role in the altered regulation of HTR1A associated with anxiety and major depression. Mediates HDAC-independent repression of HTR1A promoter in neuronal cell. Performs essential function in controlling functional maturation of synapses. The sequence is that of Coiled-coil and C2 domain-containing protein 1A (Cc2d1a) from Mus musculus (Mouse).